We begin with the raw amino-acid sequence, 320 residues long: MKRTLKVSFFILCLLPLFLGSKAEQCGSQAGGAVCPNGLCCSKFGFCGSTDPYCGDGCQSQCKSSPTPTIPTPSTGGGDVGRLVPSSLFDQMLKYRNDGRCAGHGFYTYDAFIAAARSFNGFGTTGDDNTKKKELAAFLAQTSHETTGGWPTAPDGPYAWGYCFVSEQNTQEVYCSPKDWPCAPGKKYYGRGPIQLTHNYNYGLAGQAIKEDLINNPDLLSTNPTVSFKTAIWFWMTPQANKPSSHDVITGRWTPSAADSSAGRVPGYGVITNIINGGIECGHGQDNRVDDRVGFYKRYCQIFGVDPGGNLDCNNQRSFA.

The first 23 residues, 1 to 23 (MKRTLKVSFFILCLLPLFLGSKA), serve as a signal peptide directing secretion. Residues 24–64 (EQCGSQAGGAVCPNGLCCSKFGFCGSTDPYCGDGCQSQCKS) enclose the Chitin-binding type-1 domain. Intrachain disulfides connect Cys-26-Cys-41, Cys-35-Cys-47, Cys-40-Cys-54, Cys-58-Cys-62, Cys-101-Cys-163, Cys-175-Cys-182, and Cys-281-Cys-313. Catalysis depends on Glu-145, which acts as the Proton donor.

This sequence belongs to the glycosyl hydrolase 19 family. Chitinase class I subfamily.

It carries out the reaction Random endo-hydrolysis of N-acetyl-beta-D-glucosaminide (1-&gt;4)-beta-linkages in chitin and chitodextrins.. In terms of biological role, defense against chitin-containing fungal pathogens. The protein is Endochitinase of Pisum sativum (Garden pea).